An 88-amino-acid chain; its full sequence is RQC P-site tRNA stabilizing factor (88 aa).

Positions 1–67 (MRLDKFLKVS…VEITNVKETV (67 aa)) constitute an S4 RNA-binding domain.

The protein belongs to the RqcP family. Associates with stalled 50S ribosomal subunits. Binds to RqcH, 23S rRNA and the P-site tRNA. Does not require RqcH for association with 50S subunits.

Functionally, key component of the ribosome quality control system (RQC), a ribosome-associated complex that mediates the extraction of incompletely synthesized nascent chains from stalled ribosomes and their subsequent degradation. RqcH recruits Ala-charged tRNA, and with RqcP directs the elongation of stalled nascent chains on 50S ribosomal subunits, leading to non-templated C-terminal alanine extensions (Ala tail). The Ala tail promotes nascent chain degradation. RqcP is associated with the translocation-like movement of the peptidyl-tRNA from the A-site into the P-site. The chain is RQC P-site tRNA stabilizing factor from Halalkalibacterium halodurans (strain ATCC BAA-125 / DSM 18197 / FERM 7344 / JCM 9153 / C-125) (Bacillus halodurans).